A 102-amino-acid polypeptide reads, in one-letter code: NADH-quinone oxidoreductase subunit K 1 (102 aa).

The next 3 membrane-spanning stretches (helical) occupy residues Leu-5–Ala-25, Val-30–Gly-50, and Val-62–Val-82.

The protein belongs to the complex I subunit 4L family. In terms of assembly, NDH-1 is composed of 14 different subunits. Subunits NuoA, H, J, K, L, M, N constitute the membrane sector of the complex.

It is found in the cell inner membrane. It carries out the reaction a quinone + NADH + 5 H(+)(in) = a quinol + NAD(+) + 4 H(+)(out). In terms of biological role, NDH-1 shuttles electrons from NADH, via FMN and iron-sulfur (Fe-S) centers, to quinones in the respiratory chain. The immediate electron acceptor for the enzyme in this species is believed to be ubiquinone. Couples the redox reaction to proton translocation (for every two electrons transferred, four hydrogen ions are translocated across the cytoplasmic membrane), and thus conserves the redox energy in a proton gradient. The polypeptide is NADH-quinone oxidoreductase subunit K 1 (Geobacter sp. (strain M21)).